Consider the following 118-residue polypeptide: Ribonuclease P protein component (118 aa).

It belongs to the RnpA family. In terms of assembly, consists of a catalytic RNA component (M1 or rnpB) and a protein subunit.

The enzyme catalyses Endonucleolytic cleavage of RNA, removing 5'-extranucleotides from tRNA precursor.. RNaseP catalyzes the removal of the 5'-leader sequence from pre-tRNA to produce the mature 5'-terminus. It can also cleave other RNA substrates such as 4.5S RNA. The protein component plays an auxiliary but essential role in vivo by binding to the 5'-leader sequence and broadening the substrate specificity of the ribozyme. The chain is Ribonuclease P protein component from Rickettsia rickettsii (strain Iowa).